Reading from the N-terminus, the 3828-residue chain is Histone-lysine N-methyltransferase trithorax (3828 aa).

3 disordered regions span residues Glu25–Ala179, Ala356–Gln390, and Phe512–Arg589. Low complexity predominate over residues Ala29 to Ala57. Residues Ala77–Ala89 show a composition bias toward polar residues. A compositionally biased stretch (low complexity) spans Gly101–Gly114. Over residues Asp152–Ser165 the composition is skewed to acidic residues. A compositionally biased stretch (low complexity) spans Ser359–Ala387. The segment covering Arg513–Glu523 has biased composition (basic and acidic residues). Positions Asp524–Ala553 are enriched in acidic residues. The span at Ala554–Phe581 shows a compositional bias: basic and acidic residues. A DNA-binding region (nuclear receptor) is located at residues Ala725–Ile839. 3 disordered regions span residues Glu933 to Pro1036, Glu1075 to Pro1094, and Ala1131 to Asn1170. The span at Ala960 to Lys974 shows a compositional bias: basic and acidic residues. Low complexity-rich tracts occupy residues Ala998–Ser1022 and Ala1078–Pro1094. Over residues Glu1140–Asn1170 the composition is skewed to polar residues. 3 consecutive PHD-type zinc fingers follow at residues Arg1251 to Cys1334, Tyr1335 to Cys1380, and Gly1408 to Arg1469. In terms of domain architecture, Bromo spans Ala1483–Glu1644. The segment at Thr1708 to Val1748 adopts a C2HC pre-PHD-type zinc-finger fold. The segment at Ile1769–Ala1816 adopts a PHD-type 4 zinc-finger fold. The 58-residue stretch at Lys1856 to Gln1913 folds into the FYR N-terminal domain. 8 disordered regions span residues Cys2252 to Ser2272, Ala2464 to Gln2510, Arg2826 to Ser2848, Arg2897 to Ala2973, Ala2988 to Met3031, Ala3117 to Gly3178, Asn3314 to Asp3338, and Lys3457 to Asp3487. Composition is skewed to low complexity over residues Glu2253–Thr2268, Gln2483–Gln2510, and Ser2836–Ser2848. Residues Arg2897–Thr2917 are compositionally biased toward polar residues. Composition is skewed to low complexity over residues Ala2956 to Ala2973, Ala2988 to Glu2997, Leu3005 to Met3031, and Ala3117 to Ser3132. Polar residues predominate over residues Gln3148–Ser3164. Acidic residues predominate over residues Asp3328 to Asp3338. Residues Gly3493–Tyr3577 enclose the FYR C-terminal domain. An SET domain is found at Asp3690–Lys3806. S-adenosyl-L-methionine is bound by residues His3700, Arg3702, Tyr3744, and Asn3767–His3768. 4 residues coordinate Zn(2+): Cys3770, Cys3816, Cys3818, and Cys3823. In terms of domain architecture, Post-SET spans Glu3812–Asn3828.

This sequence belongs to the class V-like SAM-binding methyltransferase superfamily. Histone-lysine methyltransferase family. TRX/MLL subfamily. Interacts with ash1 via its SET domain.

It is found in the nucleus. It catalyses the reaction L-lysyl(9)-[histone H3] + 3 S-adenosyl-L-methionine = N(6),N(6),N(6)-trimethyl-L-lysyl(9)-[histone H3] + 3 S-adenosyl-L-homocysteine + 3 H(+). In terms of biological role, histone methyltransferase that methylates 'Lys-4' of histone H3 (H3K4me). H3K4me represents a specific tag for epigenetic transcriptional activation. Functions in segment determination through interaction with genes of bithorax (BX-C) and antennapedia (ANT-C) complexes. Acts as an activator of BX-C. Involved in the very early regulation of homeotic genes expressed only in the posterior region of the embryo. The protein is Histone-lysine N-methyltransferase trithorax (trx) of Drosophila virilis (Fruit fly).